A 307-amino-acid chain; its full sequence is Probable aspartoacylase (307 aa).

Residues histidine 13 and glutamate 16 each contribute to the Zn(2+) site. Substrate contacts are provided by residues arginine 55 and 62-63; that span reads NR. Position 105 (histidine 105) interacts with Zn(2+). Glutamate 163 and tyrosine 276 together coordinate substrate.

It belongs to the AspA/AstE family. Aspartoacylase subfamily. Zn(2+) is required as a cofactor.

It carries out the reaction an N-acyl-L-aspartate + H2O = a carboxylate + L-aspartate. The polypeptide is Probable aspartoacylase (Prochlorococcus marinus (strain SARG / CCMP1375 / SS120)).